The primary structure comprises 693 residues: Bacterial dynamin-like protein (693 aa).

Residues 1 to 521 (MVNQVATDRF…DNSPGWAKWA (521 aa)) lie on the Cytoplasmic side of the membrane. One can recognise a Dynamin-type G domain in the interval 66–313 (QQGVFRLLVL…QADLDGTGFP (248 aa)). The G1 motif stretch occupies residues 76–83 (GDMKRGKS). A GTP-binding site is contributed by 79–84 (KRGKST). Residues 102 to 103 (CT) form a G2 motif region. The interval 180 to 183 (DSPG) is G3 motif. Position 235-241 (235-241 (FLVNAWD)) interacts with GTP. A G4 motif region spans residues 238–241 (NAWD). Residue Asn268 is a region of interest, G5 motif. 292-293 (SI) contributes to the GTP binding site. Residues 311–571 (GFPKFMDSLN…TAVTGILLGP (261 aa)) form a middle domain region. Positions 347–378 (REAVARRIPLLEQDVNELKKRIDSVEPEFNKL) form a coiled coil. The stretch at 522–574 (MGLLSLSKGNLAGFALAGAGFDWKNILLNYFTVIGIGGIITAVTGILLGPIGF) is an intramembrane region. Residues 572 to 606 (IGFALLGLGVGFLQADQARRELVKTAKKELVKHLP) are paddle domain. The Cytoplasmic segment spans residues 575-693 (ALLGLGVGFL…AYSNLLAYYS (119 aa)). The interval 607–693 (QVAHEQSQVV…AYSNLLAYYS (87 aa)) is GED. Positions 661–688 (ESEFNRLKNLQEDVIAQLQKIEAAYSNL) form a coiled coil.

This sequence belongs to the TRAFAC class dynamin-like GTPase superfamily. Dynamin/Fzo/YdjA family. Mitofusin subfamily. As to quaternary structure, homodimer. Self-assembles in the presence of GMP-PNP and liposomes, and probably also in the presence of GTP.

The protein resides in the cell inner membrane. It catalyses the reaction GTP + H2O = GDP + phosphate + H(+). Dynamin-related GTPase probably involved in membrane remodeling. Lipid and nucleotide-binding are thought to induce a large intramolecular rearrangement, leading to assembly on lipid bilayers and possible membrane curving. In the presence of the non-hydrolyzable GTP analog GMP-PNP self-assembles on a lipid bilayer; this does not stimulate subsequent GTPase activity. Does not bind lipids in the presence of GDP; perhaps GTP hydrolysis disrupts membrane-binding. The chain is Bacterial dynamin-like protein from Nostoc punctiforme (strain ATCC 29133 / PCC 73102).